The sequence spans 166 residues: Interferon gamma (166 aa).

The N-terminal stretch at Met1–Cys23 is a signal peptide. A Pyrrolidone carboxylic acid modification is found at Gln24. N-linked (GlcNAc...) asparagine glycans are attached at residues Asn39 and Asn106. Residues Ser147–Lys166 form a disordered region.

The protein belongs to the type II (or gamma) interferon family. As to quaternary structure, homodimer. Interacts with IFNGR1 (via extracellular domain); this interaction promotes IFNGR1 dimerization. Released primarily from activated T lymphocytes.

The protein localises to the secreted. Type II interferon produced by immune cells such as T-cells and NK cells that plays crucial roles in antimicrobial, antiviral, and antitumor responses by activating effector immune cells and enhancing antigen presentation. Primarily signals through the JAK-STAT pathway after interaction with its receptor IFNGR1 to affect gene regulation. Upon IFNG binding, IFNGR1 intracellular domain opens out to allow association of downstream signaling components JAK2, JAK1 and STAT1, leading to STAT1 activation, nuclear translocation and transcription of IFNG-regulated genes. Many of the induced genes are transcription factors such as IRF1 that are able to further drive regulation of a next wave of transcription. Plays a role in class I antigen presentation pathway by inducing a replacement of catalytic proteasome subunits with immunoproteasome subunits. In turn, increases the quantity, quality, and repertoire of peptides for class I MHC loading. Increases the efficiency of peptide generation also by inducing the expression of activator PA28 that associates with the proteasome and alters its proteolytic cleavage preference. Up-regulates as well MHC II complexes on the cell surface by promoting expression of several key molecules such as cathepsins B/CTSB, H/CTSH, and L/CTSL. Participates in the regulation of hematopoietic stem cells during development and under homeostatic conditions by affecting their development, quiescence, and differentiation. The sequence is that of Interferon gamma (IFNG) from Lama glama (Llama).